The sequence spans 153 residues: Ubiquitin-conjugating enzyme E2 ubc-18 (153 aa).

Positions Ser2–Glu149 constitute a UBC core domain. Residue Cys86 is the Glycyl thioester intermediate of the active site.

The protein belongs to the ubiquitin-conjugating enzyme family. Interacts with E3 ubiquitin-protein ligase wwp-1. Interacts with RBR-type E3 ubiquitin transferase ari-1.1. Expressed in neurons localized in the head and tail of adults.

It catalyses the reaction S-ubiquitinyl-[E1 ubiquitin-activating enzyme]-L-cysteine + [E2 ubiquitin-conjugating enzyme]-L-cysteine = [E1 ubiquitin-activating enzyme]-L-cysteine + S-ubiquitinyl-[E2 ubiquitin-conjugating enzyme]-L-cysteine.. Functionally, ubiquitin-conjugating enzyme E2. Accepts ubiquitin from the E1 complex and catalyzes its covalent attachment to other proteins. Required for diet restriction-mediated lifespan extension, probably acting as part of a complex with ubiquitin-protein ligase wwp-1. Acts redundantly with lin-35/Rb in the regulation of pharyngeal morphogenesis during embryonic development by negatively regulating the expression of proteins such as sup-35. In Caenorhabditis elegans, this protein is Ubiquitin-conjugating enzyme E2 ubc-18.